The primary structure comprises 304 residues: Rhomboid-like protein 19 (304 aa).

6 helical membrane-spanning segments follow: residues leucine 23–isoleucine 43, glycine 58–glycine 78, phenylalanine 93–tyrosine 113, valine 120–isoleucine 140, tryptophan 158–leucine 175, and alanine 179–leucine 198. Residues serine 247–valine 304 are disordered. Basic and acidic residues predominate over residues glutamate 266–threonine 284.

The protein belongs to the peptidase S54 family.

The protein localises to the membrane. Functionally, probable rhomboid-type serine protease that catalyzes intramembrane proteolysis. This is Rhomboid-like protein 19 from Arabidopsis thaliana (Mouse-ear cress).